The following is a 686-amino-acid chain: Glycine--tRNA ligase beta subunit (686 aa).

Positions 65 to 99 (ALSEEKRGPSVERAKDENGEWSKAAQGFARGQGAT) are disordered. Positions 67–84 (SEEKRGPSVERAKDENGE) are enriched in basic and acidic residues.

Belongs to the class-II aminoacyl-tRNA synthetase family. As to quaternary structure, tetramer of two alpha and two beta subunits.

The protein resides in the cytoplasm. The catalysed reaction is tRNA(Gly) + glycine + ATP = glycyl-tRNA(Gly) + AMP + diphosphate. In Leuconostoc citreum (strain KM20), this protein is Glycine--tRNA ligase beta subunit.